The primary structure comprises 506 residues: Glycine--tRNA ligase (506 aa).

The substrate site is built by arginine 99 and glutamate 189. Residues 221–223 (RNE), 231–236 (FRVREF), 305–306 (EL), and 364–367 (GVDR) each bind ATP. A substrate-binding site is contributed by 236 to 240 (FEQME). Residue 360–364 (EPSAG) participates in substrate binding.

This sequence belongs to the class-II aminoacyl-tRNA synthetase family. Homodimer.

It is found in the cytoplasm. The catalysed reaction is tRNA(Gly) + glycine + ATP = glycyl-tRNA(Gly) + AMP + diphosphate. In terms of biological role, catalyzes the attachment of glycine to tRNA(Gly). This chain is Glycine--tRNA ligase, found in Thermus thermophilus (strain ATCC BAA-163 / DSM 7039 / HB27).